A 346-amino-acid chain; its full sequence is Aspartate-semialdehyde dehydrogenase (346 aa).

NADP(+) is bound by residues 13–16 (TGAV) and 41–42 (RS). At Ser98 the chain carries Phosphoserine. Residue Arg101 coordinates phosphate. The active-site Acyl-thioester intermediate is Cys130. A Phosphotyrosine modification is found at Tyr146. Substrate is bound at residue Gln157. An NADP(+)-binding site is contributed by 160 to 161 (SG). Residue Lys221 coordinates phosphate. Substrate is bound at residue Arg243. The active-site Proton acceptor is His250. Asn324 is an NADP(+) binding site.

The protein belongs to the aspartate-semialdehyde dehydrogenase family. Homodimer.

It carries out the reaction L-aspartate 4-semialdehyde + phosphate + NADP(+) = 4-phospho-L-aspartate + NADPH + H(+). It participates in amino-acid biosynthesis; L-lysine biosynthesis via DAP pathway; (S)-tetrahydrodipicolinate from L-aspartate: step 2/4. Its pathway is amino-acid biosynthesis; L-methionine biosynthesis via de novo pathway; L-homoserine from L-aspartate: step 2/3. The protein operates within amino-acid biosynthesis; L-threonine biosynthesis; L-threonine from L-aspartate: step 2/5. Its function is as follows. Catalyzes the NADPH-dependent formation of L-aspartate-semialdehyde (L-ASA) by the reductive dephosphorylation of L-aspartyl-4-phosphate. The chain is Aspartate-semialdehyde dehydrogenase from Bacillus subtilis (strain 168).